A 363-amino-acid chain; its full sequence is MEAATMAWTAAGVGMALVYWFVWVMGAAEVKGKRAVDLKMGSITNDKVKDKYTQYWSFFRRPKETATTEASAEKVPAFVDTFYNLVTDIYEWGWGQSFHFSPSLPGRSHREATRVHEERVADLLQAKPGHRLLDVGCGVGGPMRAIAAHSGSNVVGITINEYQVNRARAHNRKAGLDSRCEVVCGNFLSMPFSDASFDGAYSIEATCHAPRLQDVYGEVFRVLKPGGLYVSYEWVTTSLYRADNPEHVEAIHGIERGDALPGLRRQDEIASIAKEVGFEVLKELDLALPPALPWWTRLKMGRIAYWRNSLVVRVLTMLRIAPKGVCEVHEMLYETAQHLTRGGETGIFTPMHMVLLRKPVESK.

A helical transmembrane segment spans residues 6–26; that stretch reads MAWTAAGVGMALVYWFVWVMG.

This sequence belongs to the class I-like SAM-binding methyltransferase superfamily. Erg6/SMT family.

It localises to the membrane. The enzyme catalyses 24-methylidenelophenol + S-adenosyl-L-methionine = (Z)-24-ethylidenelophenol + S-adenosyl-L-homocysteine + H(+). Its pathway is steroid biosynthesis; sterol biosynthesis. Its function is as follows. Catalyzes the methyl transfer from S-adenosyl-methionine to the methylene group of 24-methylene lophenol to form 24-ethylidene lophenol. This is 24-methylenesterol C-methyltransferase 2 (Smt2-1) from Oryza sativa subsp. japonica (Rice).